The chain runs to 265 residues: ATP synthase subunit a (265 aa).

Transmembrane regions (helical) follow at residues 26–46, 88–108, 132–152, 168–188, 195–217, and 231–251; these read VHLDTLFFSLVSGVLFLFFFY, IGSLALTIFCWVFVMNAIDLI, DISATLGMSVCVFALIIFYTI, PFNHWAFIPVNFLLEAVTLLA, FRLFGNMYAGELIFVLIAVMYMA, and LIWAIFHILVITLQAFIFMML.

It belongs to the ATPase A chain family. In terms of assembly, F-type ATPases have 2 components, CF(1) - the catalytic core - and CF(0) - the membrane proton channel. CF(1) has five subunits: alpha(3), beta(3), gamma(1), delta(1), epsilon(1). CF(0) has three main subunits: a(1), b(2) and c(9-12). The alpha and beta chains form an alternating ring which encloses part of the gamma chain. CF(1) is attached to CF(0) by a central stalk formed by the gamma and epsilon chains, while a peripheral stalk is formed by the delta and b chains.

Its subcellular location is the cell inner membrane. Key component of the proton channel; it plays a direct role in the translocation of protons across the membrane. The chain is ATP synthase subunit a from Histophilus somni (strain 129Pt) (Haemophilus somnus).